Here is a 146-residue protein sequence, read N- to C-terminus: Ribonuclease H (146 aa).

The 142-residue stretch at 4–145 folds into the RNase H type-1 domain; that stretch reads ELNKVVIYTD…ADMLARSQIV (142 aa). The Mg(2+) site is built by D13, E51, D73, and D137.

It belongs to the RNase H family. In terms of assembly, monomer. The cofactor is Mg(2+).

The protein resides in the cytoplasm. It catalyses the reaction Endonucleolytic cleavage to 5'-phosphomonoester.. Endonuclease that specifically degrades the RNA of RNA-DNA hybrids. The protein is Ribonuclease H of Ehrlichia chaffeensis (strain ATCC CRL-10679 / Arkansas).